The sequence spans 54 residues: Potassium channel toxin alpha-KTx 14.3 (54 aa).

Residues 1 to 23 (MKIFFAILLILAVCSMAIWTVNG) form the signal peptide.

This sequence belongs to the short scorpion toxin superfamily. Potassium channel inhibitor family. Alpha-KTx 14 subfamily. Contains 3 disulfide bridges. As to expression, expressed by the venom gland.

Its subcellular location is the secreted. Functionally, potential blocker of potassium channels. The sequence is that of Potassium channel toxin alpha-KTx 14.3 from Olivierus martensii (Manchurian scorpion).